The sequence spans 531 residues: Chaperonin GroEL, chloroplastic (531 aa).

ATP-binding positions include 30–33 (TLGP), 87–91 (DGTTT), Gly415, 481–483 (NAA), and Asp497.

This sequence belongs to the chaperonin (HSP60) family. In terms of assembly, forms a cylinder of 14 subunits composed of two heptameric rings stacked back-to-back. Interacts with the co-chaperonin GroES.

The protein localises to the plastid. It is found in the chloroplast. It catalyses the reaction ATP + H2O + a folded polypeptide = ADP + phosphate + an unfolded polypeptide.. In terms of biological role, together with its co-chaperonin GroES, plays an essential role in assisting protein folding. The GroEL-GroES system forms a nano-cage that allows encapsulation of the non-native substrate proteins and provides a physical environment optimized to promote and accelerate protein folding. The polypeptide is Chaperonin GroEL, chloroplastic (Emiliania huxleyi (Coccolithophore)).